We begin with the raw amino-acid sequence, 471 residues long: MTTEATALAYKVADITLAEWGRKEIEIAEKEMPGLMATRRKYAGQKPLKGARITGSLHMTIQTAVLIETLVDLGAEVRWASCNIFSTQDHAAAAIAAAGIPVFAWKGESLDEYWWCTRQILEFEDGKGPNLIVDDGGDATLMIHLGYKIENNPELLEKVPGNAEEKALYQQLREVYSEDTQRWHKVAAEMKGVSEETTTGVHRLYQMMEKGELLFPAINVNDSVTKSKFDNLYGCRESLADGIKRATDVMIAGKVVVVLGYGDVGKGCAHSMRTYGARVIVTEIDPICALQASMEGFEVTTMEDAVGEGNIFVTTTGNKDVITLEHMKQMRDEAIVCNIGHFDNEIQVEQLNSFAGATKLNIKPQVDKYTFESGNSIYLLAEGRLVNLGCATGHPSFVMSNSFTNQTLAQIELWTKEYSIDVYRLPKELDEEVARLHLGQLGVKLTTLSKEQADYLGIPVEGPYKPDHYRY.

The substrate site is built by threonine 60, aspartate 135, and glutamate 196. NAD(+) is bound at residue 197 to 199; it reads TTT. 2 residues coordinate substrate: lysine 226 and aspartate 230. NAD(+) contacts are provided by residues asparagine 231, 260-265, glutamate 283, asparagine 318, 339-341, and asparagine 387; these read GYGDVG and IGH.

Belongs to the adenosylhomocysteinase family. It depends on NAD(+) as a cofactor.

Its subcellular location is the cytoplasm. It catalyses the reaction S-adenosyl-L-homocysteine + H2O = L-homocysteine + adenosine. It participates in amino-acid biosynthesis; L-homocysteine biosynthesis; L-homocysteine from S-adenosyl-L-homocysteine: step 1/1. Its function is as follows. May play a key role in the regulation of the intracellular concentration of adenosylhomocysteine. The protein is Adenosylhomocysteinase of Chlorobium limicola (strain DSM 245 / NBRC 103803 / 6330).